Reading from the N-terminus, the 228-residue chain is 7-cyano-7-deazaguanine synthase (228 aa).

11 to 21 contacts ATP; the sequence is LSGGLDSATCL. Zn(2+) contacts are provided by Cys191, Cys201, Cys204, and Cys207.

It belongs to the QueC family. It depends on Zn(2+) as a cofactor.

It catalyses the reaction 7-carboxy-7-deazaguanine + NH4(+) + ATP = 7-cyano-7-deazaguanine + ADP + phosphate + H2O + H(+). It participates in purine metabolism; 7-cyano-7-deazaguanine biosynthesis. Its function is as follows. Catalyzes the ATP-dependent conversion of 7-carboxy-7-deazaguanine (CDG) to 7-cyano-7-deazaguanine (preQ(0)). This Azoarcus sp. (strain BH72) protein is 7-cyano-7-deazaguanine synthase.